Here is a 314-residue protein sequence, read N- to C-terminus: Putative S-adenosyl-L-methionine-dependent methyltransferase MRA_3805 (314 aa).

S-adenosyl-L-methionine contacts are provided by residues D132 and 161–162 (DL).

Belongs to the UPF0677 family.

In terms of biological role, exhibits S-adenosyl-L-methionine-dependent methyltransferase activity. This Mycobacterium tuberculosis (strain ATCC 25177 / H37Ra) protein is Putative S-adenosyl-L-methionine-dependent methyltransferase MRA_3805.